We begin with the raw amino-acid sequence, 553 residues long: Glucagon-like peptide 2 receptor (553 aa).

At 1–173 (MKLGSSRAGP…SFKQNVDRYA (173 aa)) the chain is on the extracellular side. Disulfide bonds link Cys-83/Cys-105, Cys-96/Cys-137, and Cys-118/Cys-159. Residues Asn-97, Asn-113, Asn-148, and Asn-162 are each glycosylated (N-linked (GlcNAc...) asparagine). Residues 174-198 (LLSTLQLMYTVGYSFSLISLFLALT) form a helical membrane-spanning segment. At 199–210 (LLLFLRKLHCTR) the chain is on the cytoplasmic side. A helical membrane pass occupies residues 211–235 (NYIHMNLFASFILRTLAVLVKDVVF). The Extracellular portion of the chain corresponds to 236–261 (YNSYSKRPDNENGWMSYLSEMSTSCR). Residues 262–285 (SVQVLLHYFVGANYLWLLVEGLYL) form a helical membrane-spanning segment. At 286–299 (HTLLEPTVLPERRL) the chain is on the cytoplasmic side. Residues 300-321 (WPRYLLLGWAFPVLFVVPWGFA) form a helical membrane-spanning segment. Over 322-339 (RAHLENTGCWTTNGNKKI) the chain is Extracellular. A helical membrane pass occupies residues 340-362 (WWIIRGPMMLCVTVNFFIFLKIL). Residues 363-386 (KLLISKLKAHQMCFRDYKYRLAKS) are Cytoplasmic-facing. The helical transmembrane segment at 387–405 (TLVLIPLLGVHEILFSFIT) threads the bilayer. Residues 406–417 (DDQVEGFAKLIR) are Extracellular-facing. The helical transmembrane segment at 418 to 438 (LFIQLTLSSFHGFLVALQYGF) threads the bilayer. The Cytoplasmic portion of the chain corresponds to 439 to 550 (ANGEVKAELR…ANTMEEILEE (112 aa)).

This sequence belongs to the G-protein coupled receptor 2 family.

Its subcellular location is the cell membrane. In terms of biological role, this is a receptor for glucagon-like peptide 2. The activity of this receptor is mediated by G proteins which activate adenylyl cyclase. The polypeptide is Glucagon-like peptide 2 receptor (GLP2R) (Homo sapiens (Human)).